A 130-amino-acid polypeptide reads, in one-letter code: MAITQNYGTGRRKSSTARVFLRKGTGNITVNNRPLDEFFGRETARMIVRQPLELTKNTESFDILVTASGGGTTGQAGAIRLGIARALVEYDETLKSELRKAGFMTRDAREVERKKVGLHKARRATQFSKR.

The protein belongs to the universal ribosomal protein uS9 family.

This is Small ribosomal subunit protein uS9 from Xanthomonas campestris pv. campestris (strain 8004).